The chain runs to 395 residues: Phosphoglycerate kinase (395 aa).

Substrate-binding positions include 20-22 (DFN), arginine 36, 59-62 (HLGR), arginine 120, and arginine 157. ATP-binding positions include lysine 208, glycine 296, glutamate 327, and 353 to 356 (GGDT).

Belongs to the phosphoglycerate kinase family. Monomer.

The protein localises to the cytoplasm. It catalyses the reaction (2R)-3-phosphoglycerate + ATP = (2R)-3-phospho-glyceroyl phosphate + ADP. Its pathway is carbohydrate degradation; glycolysis; pyruvate from D-glyceraldehyde 3-phosphate: step 2/5. This Tropheryma whipplei (strain TW08/27) (Whipple's bacillus) protein is Phosphoglycerate kinase.